Consider the following 356-residue polypeptide: Uroporphyrinogen decarboxylase (356 aa).

Residues 25–29 (RQAGR), Asp75, Tyr152, Thr207, and His326 each bind substrate.

This sequence belongs to the uroporphyrinogen decarboxylase family. Homodimer.

The protein resides in the cytoplasm. The catalysed reaction is uroporphyrinogen III + 4 H(+) = coproporphyrinogen III + 4 CO2. The protein operates within porphyrin-containing compound metabolism; protoporphyrin-IX biosynthesis; coproporphyrinogen-III from 5-aminolevulinate: step 4/4. In terms of biological role, catalyzes the decarboxylation of four acetate groups of uroporphyrinogen-III to yield coproporphyrinogen-III. The protein is Uroporphyrinogen decarboxylase of Magnetococcus marinus (strain ATCC BAA-1437 / JCM 17883 / MC-1).